The following is a 336-amino-acid chain: Torsin-1B (336 aa).

An N-terminal signal peptide occupies residues 1-24; the sequence is MRRIGAFGGSTALWALLAAHVAGA. The N-linked (GlcNAc...) asparagine glycan is linked to Asn-64. 109 to 116 serves as a coordination point for ATP; that stretch reads GWAGTGKN. Asn-165 is a glycosylation site (N-linked (GlcNAc...) asparagine).

This sequence belongs to the ClpA/ClpB family. Torsin subfamily. In terms of assembly, homohexamer. Interacts with TOR1A; the interaction may be specific of neural tissues. Interacts with TOR1AIP1; TOR1AIP1 is required for TOR1B location on the nuclear membrane. Interacts (ATP-bound) with TOR1AIP2; important for endoplasmic reticulum integrity. In terms of processing, N-glycosylated. In terms of tissue distribution, highly expressed in liver and muscle; lower expression levels are observed in brain (at protein level).

The protein resides in the endoplasmic reticulum lumen. It is found in the nucleus membrane. It carries out the reaction ATP + H2O = ADP + phosphate + H(+). Functionally, may serve as a molecular chaperone assisting in the proper folding of secreted and/or membrane proteins. Plays a role in non-neural cells nuclear envelope and endoplasmic reticulum integrity. May have a redundant function with TOR1A in non-neural tissues. The protein is Torsin-1B (Tor1b) of Mus musculus (Mouse).